Consider the following 177-residue polypeptide: ATP synthase subunit delta (177 aa).

The protein belongs to the ATPase delta chain family. F-type ATPases have 2 components, F(1) - the catalytic core - and F(0) - the membrane proton channel. F(1) has five subunits: alpha(3), beta(3), gamma(1), delta(1), epsilon(1). F(0) has three main subunits: a(1), b(2) and c(10-14). The alpha and beta chains form an alternating ring which encloses part of the gamma chain. F(1) is attached to F(0) by a central stalk formed by the gamma and epsilon chains, while a peripheral stalk is formed by the delta and b chains.

The protein localises to the cell inner membrane. Its function is as follows. F(1)F(0) ATP synthase produces ATP from ADP in the presence of a proton or sodium gradient. F-type ATPases consist of two structural domains, F(1) containing the extramembraneous catalytic core and F(0) containing the membrane proton channel, linked together by a central stalk and a peripheral stalk. During catalysis, ATP synthesis in the catalytic domain of F(1) is coupled via a rotary mechanism of the central stalk subunits to proton translocation. Functionally, this protein is part of the stalk that links CF(0) to CF(1). It either transmits conformational changes from CF(0) to CF(1) or is implicated in proton conduction. This is ATP synthase subunit delta from Erwinia tasmaniensis (strain DSM 17950 / CFBP 7177 / CIP 109463 / NCPPB 4357 / Et1/99).